A 509-amino-acid chain; its full sequence is Monofunctional riboflavin biosynthesis protein RIBA 3, chloroplastic (509 aa).

A chloroplast-targeting transit peptide spans 1-43; that stretch reads MMDSALYHPRIFFAHSFINGLYSSPRFANTCWRLVSRSSWEIK. The interval 44 to 302 is inactive DHBP synthase; it reads ASENSDRNVF…LTDLIRYRRK (259 aa). Residues 125 to 126 and 240 to 244 each bind D-ribulose 5-phosphate; these read GD and RAGHT. The tract at residues 303 to 509 is GTP cyclohydrolase II; it reads RDKLVERITV…ISDNNDQPLA (207 aa). 353 to 357 serves as a coordination point for GTP; it reads RVHSE. Zn(2+) contacts are provided by Cys358, Cys369, and Cys371. GTP contacts are provided by residues Gln374, 397–399, and Thr419; that span reads EGR. The active-site Proton acceptor; for GTP cyclohydrolase activity is Asp431. Arg433 serves as the catalytic Nucleophile; for GTP cyclohydrolase activity. GTP contacts are provided by Thr454 and Lys459.

This sequence in the N-terminal section; belongs to the DHBP synthase family. The protein in the C-terminal section; belongs to the GTP cyclohydrolase II family. Requires Zn(2+) as cofactor. Expressed in leaves, shoots, roots, flowers and siliques.

The protein localises to the plastid. It is found in the chloroplast. The catalysed reaction is GTP + 4 H2O = 2,5-diamino-6-hydroxy-4-(5-phosphoribosylamino)-pyrimidine + formate + 2 phosphate + 3 H(+). The protein operates within cofactor biosynthesis; riboflavin biosynthesis; 5-amino-6-(D-ribitylamino)uracil from GTP: step 1/4. In terms of biological role, involved in riboflavin biosynthesis. Catalyzes the conversion of GTP to 2,5-diamino-6-ribosylamino-4(3H)-pyrimidinone 5'-phosphate (DARP), formate and pyrophosphate. RIBA2 and RIBA3 together are not able to complement the loss of function of RIBA1. This Arabidopsis thaliana (Mouse-ear cress) protein is Monofunctional riboflavin biosynthesis protein RIBA 3, chloroplastic (RIBA3).